The following is a 306-amino-acid chain: tRNA dimethylallyltransferase 2 (306 aa).

11–18 (GPTASGKT) contributes to the ATP binding site. 13–18 (TASGKT) contacts substrate. An interaction with substrate tRNA region spans residues 36–39 (DSRQ).

This sequence belongs to the IPP transferase family. In terms of assembly, monomer. It depends on Mg(2+) as a cofactor.

The catalysed reaction is adenosine(37) in tRNA + dimethylallyl diphosphate = N(6)-dimethylallyladenosine(37) in tRNA + diphosphate. In terms of biological role, catalyzes the transfer of a dimethylallyl group onto the adenine at position 37 in tRNAs that read codons beginning with uridine, leading to the formation of N6-(dimethylallyl)adenosine (i(6)A). This chain is tRNA dimethylallyltransferase 2, found in Bacteroides thetaiotaomicron (strain ATCC 29148 / DSM 2079 / JCM 5827 / CCUG 10774 / NCTC 10582 / VPI-5482 / E50).